We begin with the raw amino-acid sequence, 375 residues long: S-(hydroxymethyl)glutathione dehydrogenase (375 aa).

Zn(2+) is bound at residue C40. Position 41 (H41) interacts with NAD(+). The Zn(2+) site is built by H62, E63, C92, C95, C98, C106, and C170. NAD(+)-binding positions include 195–200, D219, 293–295, and 318–320; these read GLGGIG, IGV, and TAF.

It belongs to the zinc-containing alcohol dehydrogenase family. Class-III subfamily. In terms of assembly, homotetramer. Zn(2+) serves as cofactor.

It catalyses the reaction a primary alcohol + NAD(+) = an aldehyde + NADH + H(+). The enzyme catalyses a secondary alcohol + NAD(+) = a ketone + NADH + H(+). It carries out the reaction S-(hydroxymethyl)glutathione + NADP(+) = S-formylglutathione + NADPH + H(+). The catalysed reaction is S-(hydroxymethyl)glutathione + NAD(+) = S-formylglutathione + NADH + H(+). It catalyses the reaction S-nitrosoglutathione + NADH + H(+) = S-(hydroxysulfenamide)glutathione + NAD(+). In terms of biological role, oxidizes long-chain alcohols and, in the presence of glutathione, is able to oxidize formaldehyde. Also acts as a S-nitroso-glutathione reductase by catalyzing the NADH-dependent reduction of S-nitrosoglutathione, thereby regulating protein S-nitrosylation. The polypeptide is S-(hydroxymethyl)glutathione dehydrogenase (flhA) (Paracoccus denitrificans).